We begin with the raw amino-acid sequence, 379 residues long: MVESSNTKKVKVSSLCELCHGRKAVMKRPKNLRKLCKECFFHVFETEVHNTIVENKLFANVENSEFPERRAVAIGASGGKDSTVLASVMKTLNERYNYGLKLVLLCIDEGIKGYRDHSLETVKMNQKEYDMPLEILSYKDLYDWTMDEVVSCAGIRSSCTYCGVLRRQALDKGAEKLGINHIVTGHNADDMAETVLLNLLRGDINRIENSTKIITDSENSVIQRSKPFAYMSQKEIVLYAHYKNLTYFSTECTYSEEAFRGECRSLFHSLSAVLPSVHTNTIYSGQQFKRKAKAMKRQNNKNNKNNKNNMADEHEVLPNGTVAIKESKRCKKCGSLASNDLCQACFLLAGLEVSRAKVSIDSEGDGAAKLSKTLEGLTF.

It belongs to the TtcA family. CTU1/NCS6/ATPBD3 subfamily.

The protein localises to the cytoplasm. The protein operates within tRNA modification; 5-methoxycarbonylmethyl-2-thiouridine-tRNA biosynthesis. Plays a central role in 2-thiolation of mcm(5)S(2)U at tRNA wobble positions of tRNA(Lys), tRNA(Glu) and tRNA(Gln). Directly binds tRNAs and probably acts by catalyzing adenylation of tRNAs, an intermediate required for 2-thiolation. It is unclear whether it acts as a sulfurtransferase that transfers sulfur from thiocarboxylated URM1 onto the uridine of tRNAs at wobble position. Prior mcm(5) tRNA modification by the elongator complex is required for 2-thiolation. May also be involved in protein urmylation. This Lodderomyces elongisporus (strain ATCC 11503 / CBS 2605 / JCM 1781 / NBRC 1676 / NRRL YB-4239) (Yeast) protein is Cytoplasmic tRNA 2-thiolation protein 1.